Here is a 156-residue protein sequence, read N- to C-terminus: Arginine repressor (156 aa).

Belongs to the ArgR family.

Its subcellular location is the cytoplasm. Its pathway is amino-acid biosynthesis; L-arginine biosynthesis [regulation]. Its function is as follows. Regulates arginine biosynthesis genes. This is Arginine repressor from Shewanella piezotolerans (strain WP3 / JCM 13877).